Here is a 108-residue protein sequence, read N- to C-terminus: Beta-defensin 126 (108 aa).

The signal sequence occupies residues methionine 1 to glycine 20. An in vitro binds to LPS, mediates antimicrobial activity and inhibits LPS-mediated inflammation region spans residues asparagine 21–aspartate 63. 3 cysteine pairs are disulfide-bonded: cysteine 27–cysteine 58, cysteine 34–cysteine 52, and cysteine 38–cysteine 59.

The protein belongs to the beta-defensin family. As to quaternary structure, homodimer or homooligomer; disulfide-linked. In terms of processing, O-glycosylated; glycans contain alpha(2,3)-linked sialic acids.

The protein localises to the secreted. In terms of biological role, highly glycosylated atypical beta-defensin involved in several aspects of sperm function. Facilitates sperm transport in the female reproductive tract and contributes to sperm protection against immunodetection; both functions are probably implicating the negative surface charge provided by its O-linked oligosaccharides in the sperm glycocalyx. Involved in binding of sperm to oviductal epithelial cells to form a sperm reservoir until ovulation. Release from the sperm surface during capacitation and ovaluation by an elevation of oviductal fluid pH is unmasking other surface components and allows sperm to penetrate the cumulus matrix and bind to the zona pellucida of the oocyte. In vitro has antimicrobial activity and may inhibit LPS-mediated inflammation. In Pan troglodytes (Chimpanzee), this protein is Beta-defensin 126 (DEFB126).